The following is a 548-amino-acid chain: (S)-beta-macrocarpene synthase (548 aa).

Asp302 and Asp306 together coordinate Mg(2+). Residues Asp302, Asp306, Arg443, and Asn446 each coordinate substrate. Residues 302–306 (DDTLD) carry the DDXXD motif motif. Mg(2+)-binding residues include Asn446, Ser450, and Glu454.

Belongs to the terpene synthase family. Monomer. The cofactor is Mg(2+). Requires Mn(2+) as cofactor. As to expression, expressed in roots. Not detected in leaves, unless damaged by herbivory or infected by fungi.

The protein localises to the cytoplasm. The catalysed reaction is (S)-beta-bisabolene = (S)-beta-macrocarpene. It catalyses the reaction (2E,6E)-farnesyl diphosphate = (S)-beta-bisabolene + diphosphate. It carries out the reaction (2E)-geranyl diphosphate = (4S)-limonene + diphosphate. The enzyme catalyses (2E)-geranyl diphosphate = beta-myrcene + diphosphate. The catalysed reaction is (2E)-geranyl diphosphate = terpinolene + diphosphate. It catalyses the reaction (2E)-geranyl diphosphate + H2O = (S)-linalool + diphosphate. It functions in the pathway secondary metabolite biosynthesis; terpenoid biosynthesis. Its function is as follows. Involved in the biosynthesis of the bicyclic sesquiterpene (S)-beta-macrocarpene. Can use both geranyl diphosphate and farnesyl diphosphate as substrate, but not geranylgeranyl diphosphate. Produces mainly (S)-beta-macrocarpene, but also smaller amounts of beta-bisabolene and (E)-beta-farnesene when used with farnesyl diphosphate as substrate. In the presence of geranyl diphosphate, produces the acyclic monoterpenes beta-myrcene and linalool along with minor amounts of the cyclic compounds limonene, alpha-thujene, sabinene and alpha-terpinolene. May be involved in plant defense. This chain is (S)-beta-macrocarpene synthase, found in Zea mays (Maize).